A 511-amino-acid polypeptide reads, in one-letter code: Chromosomal replication initiator protein DnaA (511 aa).

Residues 1-90 (MSVELWQQCV…RRSSAPRAAP (90 aa)) are domain I, interacts with DnaA modulators. Positions 91 to 174 (NAPVSAAMAA…QVEGALKHTS (84 aa)) are domain II. Residues 125-161 (TAEPAQASDMAEASSRDSYDSMADSAPAPVAPGRTEQ) are disordered. The interval 175–391 (YLNRTFTFET…GALKRVIAHS (217 aa)) is domain III, AAA+ region. ATP-binding residues include glycine 219, glycine 221, lysine 222, and threonine 223. Residues 392–511 (HFMGRDITIE…YKNLLRTLTT (120 aa)) are domain IV, binds dsDNA.

This sequence belongs to the DnaA family. In terms of assembly, oligomerizes as a right-handed, spiral filament on DNA at oriC.

Its subcellular location is the cytoplasm. Functionally, plays an essential role in the initiation and regulation of chromosomal replication. ATP-DnaA binds to the origin of replication (oriC) to initiate formation of the DNA replication initiation complex once per cell cycle. Binds the DnaA box (a 9 base pair repeat at the origin) and separates the double-stranded (ds)DNA. Forms a right-handed helical filament on oriC DNA; dsDNA binds to the exterior of the filament while single-stranded (ss)DNA is stabiized in the filament's interior. The ATP-DnaA-oriC complex binds and stabilizes one strand of the AT-rich DNA unwinding element (DUE), permitting loading of DNA polymerase. After initiation quickly degrades to an ADP-DnaA complex that is not apt for DNA replication. Binds acidic phospholipids. The chain is Chromosomal replication initiator protein DnaA from Pseudomonas putida (strain W619).